A 1028-amino-acid polypeptide reads, in one-letter code: U2 snRNP-associated SURP motif-containing protein (1028 aa).

Disordered regions lie at residues 1-111 (MADK…EDEK) and 141-272 (VNAA…DPST). N-acetylalanine is present on A2. A compositionally biased stretch (polar residues) spans 7-16 (GGSQKASSKT). Residues 45–54 (TRPKSPRKHN) show a composition bias toward basic residues. Residues 55–64 (YRNESARESL) show a composition bias toward basic and acidic residues. The residue at position 67 (S67) is a Phosphoserine. Residue K80 forms a Glycyl lysine isopeptide (Lys-Gly) (interchain with G-Cter in SUMO2) linkage. Positions 92-121 (AKRTLSKKEQEELKKKEDEKAAAEIYEEFL) form a coiled coil. Basic and acidic residues-rich tracts occupy residues 97–111 (SKKEQEELKKKEDEK) and 144–155 (AKEEHETDEKRG). Residues K145 and K168 each participate in a glycyl lysine isopeptide (Lys-Gly) (interchain with G-Cter in SUMO2) cross-link. Positions 169–178 (NPPNQSSNER) are enriched in polar residues. Positions 186–222 (ETKKPPLKKGEKEKKKSNLELFKEELKQIQEERDERH) are enriched in basic and acidic residues. Residues 192-232 (LKKGEKEKKKSNLELFKEELKQIQEERDERHKTKGRLSRFE) are a coiled coil. S202 is modified (phosphoserine). K208 is covalently cross-linked (Glycyl lysine isopeptide (Lys-Gly) (interchain with G-Cter in SUMO2)). S236 is modified (phosphoserine). Over residues 239-249 (DGQRRSMDAPS) the composition is skewed to basic and acidic residues. The region spanning 273 to 354 (TNLYLGNINP…FEMKLGWGKA (82 aa)) is the RRM domain. One copy of the SURP motif repeat lies at 429-472 (LIHRMIEFVVREGPMFEAMIMNREINNPMFRFLFENQTPAHVYY). Residue S484 is modified to Phosphoserine. The CID domain maps to 533–678 (LKEEQRDKLE…KLQNIFLGLV (146 aa)). Position 718 is a phosphothreonine (T718). Glycyl lysine isopeptide (Lys-Gly) (interchain with G-Cter in SUMO2) cross-links involve residues K747 and K748. Residue K759 is modified to N6-acetyllysine; alternate. A Glycyl lysine isopeptide (Lys-Gly) (interchain with G-Cter in SUMO2); alternate cross-link involves residue K759. 2 disordered regions span residues 777–840 (KWEL…EEKR) and 854–1028 (QDEL…KNKH). Positions 779–809 (ELFDQHEESEEEENQNQEEESEDEEDTQSSK) form a coiled coil. A compositionally biased stretch (acidic residues) spans 785-805 (EESEEEENQNQEEESEDEEDT). Phosphoserine occurs at positions 787, 799, and 810. 2 stretches are compositionally biased toward basic and acidic residues: residues 809 to 840 (KSEEHHLYSNPIKEEMTESKFSKYSEMSEEKR) and 873 to 921 (QVEH…TPTR). Residues K821, K828, and K831 each participate in a glycyl lysine isopeptide (Lys-Gly) (interchain with G-Cter in SUMO2) cross-link. A coiled-coil region spans residues 836–914 (SEEKRAKLRE…ESRSKDEKEK (79 aa)). T930 is subject to Phosphothreonine. S945 and S947 each carry phosphoserine. The segment covering 949–979 (KSERSERSERSHKESSRSRSSHKDSPRDVSK) has biased composition (basic and acidic residues). The segment covering 990–1028 (TPKRSRRSRSRSPKKSGKKSRSQSRSPHRSHKKSKKNKH) has biased composition (basic residues).

The protein belongs to the splicing factor SR family. Interacts with ERBB4.

Its subcellular location is the nucleus. The chain is U2 snRNP-associated SURP motif-containing protein (U2SURP) from Pongo abelii (Sumatran orangutan).